The sequence spans 159 residues: Aspartate carbamoyltransferase regulatory chain (159 aa).

Zn(2+)-binding residues include cysteine 111, cysteine 116, cysteine 141, and cysteine 144.

Belongs to the PyrI family. In terms of assembly, contains catalytic and regulatory chains. The cofactor is Zn(2+).

Functionally, involved in allosteric regulation of aspartate carbamoyltransferase. The polypeptide is Aspartate carbamoyltransferase regulatory chain (Aeropyrum pernix (strain ATCC 700893 / DSM 11879 / JCM 9820 / NBRC 100138 / K1)).